Consider the following 294-residue polypeptide: Bifunctional protein FolD (294 aa).

NADP(+) is bound by residues 169–171, T196, and V237; that span reads GRG.

The protein belongs to the tetrahydrofolate dehydrogenase/cyclohydrolase family. As to quaternary structure, homodimer.

It carries out the reaction (6R)-5,10-methylene-5,6,7,8-tetrahydrofolate + NADP(+) = (6R)-5,10-methenyltetrahydrofolate + NADPH. It catalyses the reaction (6R)-5,10-methenyltetrahydrofolate + H2O = (6R)-10-formyltetrahydrofolate + H(+). It participates in one-carbon metabolism; tetrahydrofolate interconversion. In terms of biological role, catalyzes the oxidation of 5,10-methylenetetrahydrofolate to 5,10-methenyltetrahydrofolate and then the hydrolysis of 5,10-methenyltetrahydrofolate to 10-formyltetrahydrofolate. This is Bifunctional protein FolD from Renibacterium salmoninarum (strain ATCC 33209 / DSM 20767 / JCM 11484 / NBRC 15589 / NCIMB 2235).